The chain runs to 297 residues: MVNIIQDFIPVGANNRPGYAMTPLYITVHNTANTAVGADAAAHARYLKNPDTTTSWHFTVDDTEIYQHLPLNENGWHAGDGNGSGNRASIGIEICENADGDFAKATANAQWLIKTLMAEHNISLANVVPHKYWSGKECPRKLLDTWDSFKAGIGGGGSQTYVVKQGDTLTSIARAFGVTVAQLQEWNNIEDPNLIRVGQVLIVSAPSAAEKPELYPLPDGIIQLTTPYTSGEHVFQVQRALAALYFYPDKGAVNNGIDGVYGPKTADAVARFQSVNGLTADGIYGPATKEKIAAQLS.

The N-terminal stretch at 1–44 is a signal peptide; sequence MVNIIQDFIPVGANNRPGYAMTPLYITVHNTANTAVGADAAAHA. The N-acetylmuramoyl-L-alanine amidase domain maps to 45-140; that stretch reads RYLKNPDTTT…KYWSGKECPR (96 aa). The 45-residue stretch at 159 to 203 folds into the LysM domain; it reads QTYVVKQGDTLTSIARAFGVTVAQLQEWNNIEDPNLIRVGQVLIV.

It belongs to the N-acetylmuramoyl-L-alanine amidase 2 family.

It is found in the secreted. The enzyme catalyses Hydrolyzes the link between N-acetylmuramoyl residues and L-amino acid residues in certain cell-wall glycopeptides.. Functionally, autolysins are involved in some important biological processes such as cell separation, cell-wall turnover, competence for genetic transformation, formation of the flagella and sporulation. This is N-acetylmuramoyl-L-alanine amidase XlyA (xlyA) from Bacillus subtilis (strain 168).